Reading from the N-terminus, the 308-residue chain is Ribonuclease HIII (308 aa).

The RNase H type-2 domain maps to 91 to 308 (KNVIGSDEVG…TEKALKMVKK (218 aa)). A divalent metal cation is bound by residues aspartate 97, glutamate 98, and aspartate 202.

This sequence belongs to the RNase HII family. RnhC subfamily. The cofactor is Mn(2+). Mg(2+) is required as a cofactor.

Its subcellular location is the cytoplasm. The catalysed reaction is Endonucleolytic cleavage to 5'-phosphomonoester.. Functionally, endonuclease that specifically degrades the RNA of RNA-DNA hybrids. The protein is Ribonuclease HIII of Listeria monocytogenes serotype 4b (strain F2365).